A 616-amino-acid polypeptide reads, in one-letter code: Pyrophosphate--fructose 6-phosphate 1-phosphotransferase subunit alpha (616 aa).

The protein belongs to the phosphofructokinase type A (PFKA) family. PPi-dependent PFK group II subfamily. Clade 'Long' sub-subfamily. Tetramer of two alpha (regulatory) and two beta (catalytic) chains.

It is found in the cytoplasm. It functions in the pathway carbohydrate degradation; glycolysis; D-glyceraldehyde 3-phosphate and glycerone phosphate from D-glucose: step 3/4. With respect to regulation, allosterically activated by fructose 2,6-bisphosphate. Its function is as follows. Regulatory subunit of pyrophosphate--fructose 6-phosphate 1-phosphotransferase. The chain is Pyrophosphate--fructose 6-phosphate 1-phosphotransferase subunit alpha from Solanum tuberosum (Potato).